We begin with the raw amino-acid sequence, 231 residues long: 7-cyano-7-deazaguanine synthase (231 aa).

8 to 18 (FSGGQDSTTCL) is an ATP binding site. Zn(2+) is bound by residues C188, C197, C200, and C203.

It belongs to the QueC family. Zn(2+) serves as cofactor.

It catalyses the reaction 7-carboxy-7-deazaguanine + NH4(+) + ATP = 7-cyano-7-deazaguanine + ADP + phosphate + H2O + H(+). It participates in purine metabolism; 7-cyano-7-deazaguanine biosynthesis. Functionally, catalyzes the ATP-dependent conversion of 7-carboxy-7-deazaguanine (CDG) to 7-cyano-7-deazaguanine (preQ(0)). This chain is 7-cyano-7-deazaguanine synthase, found in Escherichia coli O157:H7.